A 309-amino-acid chain; its full sequence is UDP-N-acetylenolpyruvoylglucosamine reductase (309 aa).

Positions 34–221 constitute an FAD-binding PCMH-type domain; it reads RVGGPAQVLF…TAAREAAQPI (188 aa). The active site involves R179. The active-site Proton donor is S228. E298 is a catalytic residue.

This sequence belongs to the MurB family. Requires FAD as cofactor.

The protein resides in the cytoplasm. The enzyme catalyses UDP-N-acetyl-alpha-D-muramate + NADP(+) = UDP-N-acetyl-3-O-(1-carboxyvinyl)-alpha-D-glucosamine + NADPH + H(+). Its pathway is cell wall biogenesis; peptidoglycan biosynthesis. In terms of biological role, cell wall formation. This chain is UDP-N-acetylenolpyruvoylglucosamine reductase, found in Methylorubrum extorquens (strain CM4 / NCIMB 13688) (Methylobacterium extorquens).